The chain runs to 64 residues: Conotoxin LiC121 (64 aa).

The N-terminal stretch at 1-22 (MRCVPVFIILLLLSPSAPSVDA) is a signal peptide. The propeptide occupies 23-48 (HPKTKDDVPLASFHDDAKRTLQRLWI).

It belongs to the conotoxin T superfamily. Contains 2 disulfide bonds that can be either 'C1-C3, C2-C4' or 'C1-C4, C2-C3', since these disulfide connectivities have been observed for conotoxins with cysteine framework V (for examples, see AC P0DQQ7 and AC P81755). As to expression, expressed by the venom duct.

The protein resides in the secreted. The sequence is that of Conotoxin LiC121 from Conus lividus (Livid cone).